Consider the following 550-residue polypeptide: Crystal protein (550 aa).

The signal sequence occupies residues M1–A19. C91 and C111 are oxidised to a cystine. The N-linked (GlcNAc...) asparagine glycan is linked to N156. The Acyl-ester intermediate role is filled by S215. A disulfide bridge links C267 with C274. Active-site charge relay system residues include E340 and H443. N506 is a glycosylation site (N-linked (GlcNAc...) asparagine).

This sequence belongs to the type-B carboxylesterase/lipase family.

It is found in the cytoplasmic vesicle. It localises to the esterosome membrane. This is Crystal protein (cryS) from Dictyostelium discoideum (Social amoeba).